An 85-amino-acid polypeptide reads, in one-letter code: Conotoxin Cap15b (85 aa).

A signal peptide spans 1-23 (MEKLTFLILVATVLLTIHVLVQS). A propeptide spanning residues 24–49 (DGDKHLKRRPKQYATKRLSALMRGHR) is cleaved from the precursor. The residue at position 50 (Q50) is a Pyrrolidone carboxylic acid.

The protein belongs to the conotoxin O2 superfamily. In terms of processing, contains 4 disulfide bonds. Expressed by the venom duct.

The protein resides in the secreted. The protein is Conotoxin Cap15b of Conus capitaneus (Captain cone).